The following is a 290-amino-acid chain: CTP-dependent diacylglycerol kinase 1 (290 aa).

A disordered region spans residues 1–33; the sequence is MGTEDAIALPNSTLEPRTEAKQRLSSKSHQVSA. The Lumenal portion of the chain corresponds to 1-77; the sequence is MGTEDAIALP…FITKHEIPRK (77 aa). Residue N11 is glycosylated (N-linked (GlcNAc...) asparagine). The segment covering 23–33 has biased composition (polar residues); that stretch reads RLSSKSHQVSA. Phosphoserine occurs at positions 44, 45, and 46. The chain crosses the membrane as a helical span at residues 78–95; the sequence is VFHSSIGFITLYLYTQGI. Residues 96 to 103 are Cytoplasmic-facing; that stretch reads NYKNVLWP. The helical transmembrane segment at 104–124 threads the bilayer; the sequence is LIYAFIILFILDLIRLNWPFF. The Lumenal segment spans residues 125–140; that stretch reads NMLYCRTVGALMRKKE. The chain crosses the membrane as a helical span at residues 141 to 161; the sequence is IHTYNGVLWYILGLIFSFNFF. The Cytoplasmic segment spans residues 162–163; that stretch reads SK. Residues 164-184 form a helical membrane-spanning segment; it reads DVTLISLFLLSWSDTAAATIG. Topologically, residues 185–203 are lumenal; it reads RKYGHLTPKVARNKSLAGS. N-linked (GlcNAc...) asparagine glycosylation is present at N197. A helical transmembrane segment spans residues 204 to 224; it reads IAAFTVGVITCWVFYGYFVPA. The Cytoplasmic portion of the chain corresponds to 225–244; sequence YSYVNKPGEIQWSPETSRLS. Residues 245–265 traverse the membrane as a helical segment; that stretch reads LNMLSLLGGVVAALSEGIDLF. Residues 266–290 are Lumenal-facing; the sequence is NWDDNFTIPVLSSLFMNAVIKTFKK. N-linked (GlcNAc...) asparagine glycosylation occurs at N270.

Belongs to the DGK1 family. It depends on Ca(2+) as a cofactor. Mg(2+) serves as cofactor. CKII-mediated phosphorylation of Ser-45 and Ser-46 regulates its function in the production of PA.

The protein resides in the endoplasmic reticulum membrane. The protein localises to the nucleus membrane. It catalyses the reaction a 1,2-diacyl-sn-glycerol + CTP = a 1,2-diacyl-sn-glycero-3-phosphate + CDP + H(+). The catalysed reaction is 1,2-di-(9Z-octadecenoyl)-sn-glycerol + CTP = 1,2-di-(9Z-octadecenoyl)-sn-glycero-3-phosphate + CDP + H(+). Its activity is regulated as follows. Inhibited by N-ethylmaleimide, dCTP, and sphingoid bases including sphinganine, sphingosine and phytosphingosine. DAG pyrophosphate, cardiolipin, CDP-DAG, and lyso-PA inhibited activity by 23-66%. Also inhibited by Ca(2+) concentrations of more than 1 mM, by addition of EDTA or EGTA at 5 mM, and by 5 mM Mn(2+) and Zn(2+). Stimulated by major membrane phospholipids including phosphatidylcholine, phosphatidylethanolamine, phosphatidylinositol, phosphatidylserine, phosphatidylglycerol, and phosphatidate. Also stimulated to a maximum by addition of TritonX-100 at a concentration of 1 mM, followed by an apparent inhibition of activity at concentrations above 1 mM. CTP-dependent diacylglycerol kinase that catalyzes the phosphorylation of diacylglycerol (DAG) to phosphatidate (PA). Controls phosphatidate levels at the nuclear envelope. Counteracts the activity of PA phosphatase PAH1/SMP2, controlling the levels of PA and DAG for the synthesis of triacylglycerol and membrane phospholipids. May be involved in vesicle trafficking between the endoplasmic reticulum and the Golgi apparatus. Required to convert triacylglycerol-derived DAG to PA for phospholipid synthesis during growth resumption from stationary phase in the absence of de novo fatty acid synthesis. Involved in the resistance to nickel chloride and nalidixic acid. The protein is CTP-dependent diacylglycerol kinase 1 (DGK1) of Saccharomyces cerevisiae (strain ATCC 204508 / S288c) (Baker's yeast).